The chain runs to 1187 residues: DNA-directed RNA polymerase subunit beta (1187 aa).

Positions 1150 to 1187 (KDEDDDPASSADDLGFNIGARPDAAAKEDQKAEEPEYQ) are disordered. A compositionally biased stretch (basic and acidic residues) spans 1173 to 1187 (AAAKEDQKAEEPEYQ).

The protein belongs to the RNA polymerase beta chain family. The RNAP catalytic core consists of 2 alpha, 1 beta, 1 beta' and 1 omega subunit. When a sigma factor is associated with the core the holoenzyme is formed, which can initiate transcription.

The enzyme catalyses RNA(n) + a ribonucleoside 5'-triphosphate = RNA(n+1) + diphosphate. DNA-dependent RNA polymerase catalyzes the transcription of DNA into RNA using the four ribonucleoside triphosphates as substrates. The chain is DNA-directed RNA polymerase subunit beta from Bifidobacterium longum (strain NCC 2705).